Consider the following 920-residue polypeptide: Rho guanine nucleotide exchange factor 1 (920 aa).

Residues 39–230 enclose the RGSL domain; sequence DQNSQFQSLE…SLYMRHLGVR (192 aa). The interval 231 to 404 is disordered; that stretch reads TKSGDKKSGR…PGWRELVPPD (174 aa). Residues 281-311 are compositionally biased toward basic and acidic residues; the sequence is DCRHLKVEADAEKPGPADRKGGLGMSSRDRT. The span at 364 to 380 shows a compositional bias: acidic residues; that stretch reads STEDNGETESPEPGDDG. 5 positions are modified to phosphoserine: Ser373, Gly386, Glu390, Ser408, and Ser412. The 190-residue stretch at 415–604 folds into the DH domain; sequence KRQEVISELL…REILHHVNQA (190 aa). A phosphothreonine mark is found at Arg432 and Thr694. Positions 646–759 constitute a PH domain; it reads KLVHEGPLTW…WCNLITETAG (114 aa). Tyr737 carries the post-translational modification Phosphotyrosine; by JAK2. 2 disordered regions span residues 764-797 and 840-864; these read PAPASRLKPRPSPSSIREPLLSSSENGTGGAEMA and TEEDSGAGPPRDGDGVPGGRAPGPV. Residues 865-894 adopt a coiled-coil conformation; it reads HTQEIEENLLSLEVAIRQLEELEEEFCRLR. Position 905 is a phosphoserine (Ser905).

As to quaternary structure, interacts with RHOA, GNA12 and GNA13. Homooligomerizes through the coiled coil region. Interacts with CTNNAL1. May interact with CCPG1. Post-translationally, phosphorylated by PKCA. Angiotensin-2 induced Tyr-737 phosphorylation is mediated by JAK2. Isoform 5 is phosphorylated at 'Ser-390'. Ubiquitously expressed.

Its subcellular location is the cytoplasm. The protein resides in the membrane. In terms of biological role, seems to play a role in the regulation of RhoA GTPase by guanine nucleotide-binding alpha-12 (GNA12) and alpha-13 (GNA13) subunits. Acts as a GTPase-activating protein (GAP) for GNA12 and GNA13, and as guanine nucleotide exchange factor (GEF) for RhoA GTPase. Activated G alpha 13/GNA13 stimulates the RhoGEF activity through interaction with the RGS-like domain. This GEF activity is inhibited by binding to activated GNA12. Mediates angiotensin-2-induced RhoA activation. Isoform 3 and isoform 4 do not homooligomerize and show an enhanced RhoGEF activity. In lymphoid follicles, may trigger activation of GNA13 as part of S1PR2-dependent signaling pathway that leads to inhibition of germinal center (GC) B cell growth and migration outside the GC niche. In Mus musculus (Mouse), this protein is Rho guanine nucleotide exchange factor 1 (Arhgef1).